The following is a 71-amino-acid chain: Ceratotoxin-D (71 aa).

A signal peptide spans 1–23 (MANLKAVFLICILAFIAFHCVVG). Positions 24-35 (APTAEDSIVVKR) are excised as a propeptide.

As to quaternary structure, homomer of four to six subunits.

The protein localises to the secreted. Functionally, female-specific peptides with potent activity against Gram-positive and Gram-negative bacteria. They have as well hemolytic activity. In Ceratitis capitata (Mediterranean fruit fly), this protein is Ceratotoxin-D (CTXD).